We begin with the raw amino-acid sequence, 380 residues long: Cytochrome b (380 aa).

4 helical membrane passes run 33 to 53, 77 to 98, 113 to 133, and 178 to 198; these read FGSL…FLAM, WLIR…FIHV, WNIG…GYVL, and FFAF…VHLL. His-83 and His-97 together coordinate heme b. The heme b site is built by His-182 and His-196. His-201 is a binding site for a ubiquinone. Transmembrane regions (helical) follow at residues 226 to 246, 288 to 308, 320 to 340, and 347 to 367; these read IKDL…VLFF, LGGV…PFLN, ITQF…WIGG, and FTTI…VLMP.

This sequence belongs to the cytochrome b family. The cytochrome bc1 complex contains 11 subunits: 3 respiratory subunits (MT-CYB, CYC1 and UQCRFS1), 2 core proteins (UQCRC1 and UQCRC2) and 6 low-molecular weight proteins (UQCRH/QCR6, UQCRB/QCR7, UQCRQ/QCR8, UQCR10/QCR9, UQCR11/QCR10 and a cleavage product of UQCRFS1). This cytochrome bc1 complex then forms a dimer. It depends on heme b as a cofactor.

The protein resides in the mitochondrion inner membrane. Its function is as follows. Component of the ubiquinol-cytochrome c reductase complex (complex III or cytochrome b-c1 complex) that is part of the mitochondrial respiratory chain. The b-c1 complex mediates electron transfer from ubiquinol to cytochrome c. Contributes to the generation of a proton gradient across the mitochondrial membrane that is then used for ATP synthesis. This Thomasomys ischyrus (Strong-tailed oldfield mouse) protein is Cytochrome b (MT-CYB).